We begin with the raw amino-acid sequence, 390 residues long: Altered inheritance of mitochondria protein 6 (390 aa).

The N-terminal stretch at methionine 1–alanine 17 is a signal peptide.

This sequence belongs to the AIM6 family.

This Saccharomyces cerevisiae (strain ATCC 204508 / S288c) (Baker's yeast) protein is Altered inheritance of mitochondria protein 6.